A 182-amino-acid polypeptide reads, in one-letter code: MSIEVFNESGRGEVNEEELIDVARYALWTLDVHPAAELSIHIVDLETIEDLHVRWMDLPGPTDVMSFPMDELTPGWGRKDAAEPSPAMLGDIMLCPDFAEGQATRAGHSLAHELDLLTVHGVLHLLGFDHVTPEDEQKMFALQNEILANWYDSQEERGVSFAPKPTGAGAFPSAADRDDTQN.

Zn(2+) is bound by residues His120, His124, and His130. Positions 157 to 182 are disordered; the sequence is RGVSFAPKPTGAGAFPSAADRDDTQN.

The protein belongs to the endoribonuclease YbeY family. Zn(2+) is required as a cofactor.

It localises to the cytoplasm. Functionally, single strand-specific metallo-endoribonuclease involved in late-stage 70S ribosome quality control and in maturation of the 3' terminus of the 16S rRNA. This Corynebacterium jeikeium (strain K411) protein is Endoribonuclease YbeY.